We begin with the raw amino-acid sequence, 172 residues long: RNA pyrophosphohydrolase (172 aa).

Residues 6–149 enclose the Nudix hydrolase domain; it reads GYRLNVGIVI…KRDVYRRAMK (144 aa). Positions 38–59 match the Nudix box motif; it reads GGIDDGESPEQAMFRELYEEVG.

Belongs to the Nudix hydrolase family. RppH subfamily. A divalent metal cation is required as a cofactor.

Functionally, accelerates the degradation of transcripts by removing pyrophosphate from the 5'-end of triphosphorylated RNA, leading to a more labile monophosphorylated state that can stimulate subsequent ribonuclease cleavage. The polypeptide is RNA pyrophosphohydrolase (Vibrio cholerae serotype O1 (strain ATCC 39315 / El Tor Inaba N16961)).